A 259-amino-acid chain; its full sequence is tRNA (guanine-N(7)-)-methyltransferase (259 aa).

Positions 1-36 (MTFPSHNPPETGHPSAAPDEALPAAEAPVPGDPEAR) are disordered. Residues 14 to 29 (PSAAPDEALPAAEAPV) are compositionally biased toward low complexity. Positions 91, 116, 143, and 166 each coordinate S-adenosyl-L-methionine. Residue aspartate 166 is part of the active site. Residues lysine 170, aspartate 202, and 237 to 240 (TKFE) contribute to the substrate site.

Belongs to the class I-like SAM-binding methyltransferase superfamily. TrmB family.

It catalyses the reaction guanosine(46) in tRNA + S-adenosyl-L-methionine = N(7)-methylguanosine(46) in tRNA + S-adenosyl-L-homocysteine. The protein operates within tRNA modification; N(7)-methylguanine-tRNA biosynthesis. Its function is as follows. Catalyzes the formation of N(7)-methylguanine at position 46 (m7G46) in tRNA. This chain is tRNA (guanine-N(7)-)-methyltransferase, found in Aromatoleum aromaticum (strain DSM 19018 / LMG 30748 / EbN1) (Azoarcus sp. (strain EbN1)).